A 163-amino-acid chain; its full sequence is MPSLDVVSTVDMQAMDNAVNNAKRDLGNRYDFKNSKYELELNRKDKAIEIVAEDEFKLKAVIETLIQQCVRFKLDSKCLDIADSHTVSLGAAKTEIKIKDGLTKETASKITKFIKSTKLKLDSAIQGEQIRITGKQIDDLQEIMRLLSEQDFDVPLQYVNMKR.

It belongs to the YajQ family.

Functionally, nucleotide-binding protein. The chain is Nucleotide-binding protein cbdbA1256 from Dehalococcoides mccartyi (strain CBDB1).